The primary structure comprises 299 residues: uncharacterized protein (299 aa).

This is an uncharacterized protein from Mycobacterium tuberculosis (strain CDC 1551 / Oshkosh).